A 416-amino-acid polypeptide reads, in one-letter code: cAMP-dependent protein kinase regulatory subunit (416 aa).

Residues 2–183 (VSSLPKESQA…RLEKSIRNNF (182 aa)) are dimerization and phosphorylation. A phosphoserine mark is found at Ser3, Ser4, Ser9, Ser68, Ser70, Ser74, Ser77, Ser79, Ser81, Ser83, and Ser84. Residues 8–45 (ESQAELQLFQNEINAANPSDFLQFSANYFNKRLEQQRA) form a dimerization/docking domain (D/D) region. The tract at residues 65–138 (PEESFSRPQS…TSTPPLPMHF (74 aa)) is disordered. Positions 70-84 (SRPQSAQSQSRSRSS) are enriched in low complexity. Phosphothreonine is present on Thr129. Ser130 is modified (phosphoserine). Thr131 and Thr144 each carry phosphothreonine. The Inhibitor sequence (IS) motif lies at 142–146 (RRTSV). Position 145 is a phosphoserine; by autocatalysis (Ser145). Phosphoserine is present on Ser147. Phosphothreonine is present on residues Thr150 and Thr160. Residues 184–301 (LFNK…KSMP), Glu249, Arg258, 302–416 (VLKS…PTRH), Glu368, and Arg377 contribute to the 3',5'-cyclic AMP site.

This sequence belongs to the cAMP-dependent kinase regulatory chain family. As to quaternary structure, the inactive holoenzyme of cAMP-dependent protein kinase is a tetramer, composed of 2 regulatory subunits (R, encoded by BCY1) and two catalytic subunits (C, encoded by the 3 partially redundant TPK1, TPK2, and TPK3 genes). Activation by cAMP causes dissociation of the holoenzyme, producing 2 active catalytic monomers C and a regulatory dimer R(2). Phosphorylated by YAK1 in response to glucose starvation. Phosphorylated by MCK1 at Thr-129 upon TOR complex 1 (TORC1) inhibition. Thr-129 phosphorylation activates BCY1 to inhibit PKA. TORC1 inhibits phosphorylation of RxxS/T sites but has no effect on Ser-145 phosphorylation. The phosphorylation sites can be clustered in several groups, all localized in the N-terminal part. The first cluster termed cluster I (CI) is located close to the N-terminus and includes Ser-3, Ser-4 and Ser-9. The second includes Ser-68, Ser-70, Ser-74, Ser-77, Ser-79, Ser-81, Ser-83, and Ser-84. This cluster of phosphorylation sites, termed cluster II (CII), is important for BCY1 cytoplasmic localization and function. The third cluster of phosphorylated residues consists of Thr-144, Ser-145, Ser-147, Thr-150, and Thr-160. This cluster falls within or near the so-called autoinhibitory domain where the catalytic subunit of PKA autophosphorylates the highly conserved Ser-145 to inhibit BCY1. A last cluster of phosphorylated residues included Thr-129, Ser-130, and Thr-131 and is termed cluster III (CIII). Sites in CIII (and to a lesser extent in CII) are hyperphosphorylated in response to rapamycin.

It localises to the cytoplasm. It is found in the nucleus. Regulatory subunit of the cyclic AMP-dependent protein kinase (PKA), an effector of the Ras/cAMP pathway. Inhibits PKA activity in the absence of cAMP. cAMP activates PKA and promotes growth and proliferation in response to good nutrient conditions. Together with ZDS1, provides a negative feedback control on the cell wall integrity-signaling pathway by acting as a negative regulator of MAP kinase SLT2/MPK1. The polypeptide is cAMP-dependent protein kinase regulatory subunit (BCY1) (Saccharomyces cerevisiae (strain ATCC 204508 / S288c) (Baker's yeast)).